We begin with the raw amino-acid sequence, 162 residues long: Small ribosomal subunit protein uS9 (162 aa).

The protein belongs to the universal ribosomal protein uS9 family.

In Methylobacterium sp. (strain 4-46), this protein is Small ribosomal subunit protein uS9.